We begin with the raw amino-acid sequence, 407 residues long: MKYDNLLDRFIKYVKVNTRSDPDSETTPSTESQEAFALTILKPEMEAIGLQDVHYNPVNGYLIGTLPANNPTLTRKIGFIAHMDTADFNAENVNPQIIDNYQGGDITLGSSNYKLDPKAFPNLNNYIGQTLITTDGTTLLGADDKSGIAEIMTAIEFLTSQPQIEHCDIKVAFGPDEEIGVGADKFEVADFEVDFAYTMDGGPLGELQYETFSAAALEVTFLGRNVHPGTAKDQMINALELAIDFHEKLPAKERPEYTDGYQGFYHLTGLTGTVEEARASYIIRDFEEASFEARKVKVENIAQSMNAQLGTKRVLVELNDQYYNMKKVIEKDMTAIELAKEVMEELAIKPVIEPIRGGTDGSKISFMGIPTPNIFAGGENMHGRFEFVSLQTMERAVDVIIGLVCKA.

Residue His82 coordinates Zn(2+). Asp84 is a catalytic residue. Asp143 serves as a coordination point for Zn(2+). The active-site Proton acceptor is the Glu177. Zn(2+) contacts are provided by Glu178, Asp200, and His382.

This sequence belongs to the peptidase M20B family. Zn(2+) is required as a cofactor.

It is found in the cytoplasm. The catalysed reaction is Release of the N-terminal residue from a tripeptide.. In terms of biological role, cleaves the N-terminal amino acid of tripeptides. This is Peptidase T from Streptococcus pyogenes serotype M28 (strain MGAS6180).